A 389-amino-acid polypeptide reads, in one-letter code: Formate-dependent phosphoribosylglycinamide formyltransferase (389 aa).

N(1)-(5-phospho-beta-D-ribosyl)glycinamide is bound by residues 21 to 22 (EL) and E81. Residues R113, K154, 159–164 (SSGKGQ), 194–197 (EEFI), and E202 contribute to the ATP site. The region spanning 118–307 (RLAAEKLGLK…EFEIHVRAIL (190 aa)) is the ATP-grasp domain. 2 residues coordinate Mg(2+): E266 and E278. Residues D285, K353, and 360 to 361 (RR) contribute to the N(1)-(5-phospho-beta-D-ribosyl)glycinamide site.

The protein belongs to the PurK/PurT family. In terms of assembly, homodimer.

The enzyme catalyses N(1)-(5-phospho-beta-D-ribosyl)glycinamide + formate + ATP = N(2)-formyl-N(1)-(5-phospho-beta-D-ribosyl)glycinamide + ADP + phosphate + H(+). It functions in the pathway purine metabolism; IMP biosynthesis via de novo pathway; N(2)-formyl-N(1)-(5-phospho-D-ribosyl)glycinamide from N(1)-(5-phospho-D-ribosyl)glycinamide (formate route): step 1/1. Its function is as follows. Involved in the de novo purine biosynthesis. Catalyzes the transfer of formate to 5-phospho-ribosyl-glycinamide (GAR), producing 5-phospho-ribosyl-N-formylglycinamide (FGAR). Formate is provided by PurU via hydrolysis of 10-formyl-tetrahydrofolate. The protein is Formate-dependent phosphoribosylglycinamide formyltransferase of Methanocaldococcus jannaschii (strain ATCC 43067 / DSM 2661 / JAL-1 / JCM 10045 / NBRC 100440) (Methanococcus jannaschii).